Reading from the N-terminus, the 310-residue chain is Methionyl-tRNA formyltransferase (310 aa).

A (6S)-5,6,7,8-tetrahydrofolate-binding site is contributed by 109-112 (SLLP).

It belongs to the Fmt family.

It carries out the reaction L-methionyl-tRNA(fMet) + (6R)-10-formyltetrahydrofolate = N-formyl-L-methionyl-tRNA(fMet) + (6S)-5,6,7,8-tetrahydrofolate + H(+). In terms of biological role, attaches a formyl group to the free amino group of methionyl-tRNA(fMet). The formyl group appears to play a dual role in the initiator identity of N-formylmethionyl-tRNA by promoting its recognition by IF2 and preventing the misappropriation of this tRNA by the elongation apparatus. This Pseudomonas entomophila (strain L48) protein is Methionyl-tRNA formyltransferase.